The chain runs to 365 residues: S-adenosylmethionine:tRNA ribosyltransferase-isomerase (365 aa).

The protein belongs to the QueA family. In terms of assembly, monomer.

The protein localises to the cytoplasm. It carries out the reaction 7-aminomethyl-7-carbaguanosine(34) in tRNA + S-adenosyl-L-methionine = epoxyqueuosine(34) in tRNA + adenine + L-methionine + 2 H(+). It participates in tRNA modification; tRNA-queuosine biosynthesis. Functionally, transfers and isomerizes the ribose moiety from AdoMet to the 7-aminomethyl group of 7-deazaguanine (preQ1-tRNA) to give epoxyqueuosine (oQ-tRNA). The sequence is that of S-adenosylmethionine:tRNA ribosyltransferase-isomerase from Rickettsia africae (strain ESF-5).